The sequence spans 259 residues: MAVTNTPELIEADRLSYYAISKIEAQFIYKEIFTDHCYDIANLPSNPFIVDAGANIGLFSLYMKRKYPQAKILAFEPAPVCYDVLSRNLALNDALSGVKALQCGLSSSAGTLPLTYFPNLPGNSTLVPEEKNKLYEEAVRKRGKETADERFGGAVKVDVELKRLSDVLREYYPDGKPDQGLERIDLLKVDVEGAELEVLKGVDEEHWELVRNVVVETWEPSGIRPQIEALLEDKGFDITRDRAEWAPDQFSMITARRQD.

Belongs to the FkbM methyltransferase family.

Its pathway is antibiotic biosynthesis. In terms of biological role, methyltransferase; part of the gene cluster that mediates the biosynthesis of sordarin and hypoxysordarin, glycoside antibiotics with a unique tetracyclic diterpene aglycone structure. First, the geranylgeranyl diphosphate synthase sdnC constructs GGDP from farnesyl diphosphate and isopentenyl diphosphate. The diterpene cyclase sdnA then catalyzes the cyclization of GGDP to afford cycloaraneosene. Cycloaraneosene is then hydroxylated four times by the putative cytochrome P450 monooxygenases sdnB, sdnE, sdnF and sdnH to give a hydroxylated cycloaraneosene derivative such as cycloaraneosene-8,9,13,19-tetraol. Although the order of the hydroxylations is unclear, at least C8, C9 and C13 of the cycloaraneosene skeleton are hydroxylated before the sordaricin formation. Dehydration of the 13-hydroxy group of the hydroxylated cycloaraneosene derivative might be catalyzed by an unassigned hypothetical protein such as sdnG and sdnP to construct the cyclopentadiene moiety. The FAD-dependent oxidoreductase sdnN is proposed to catalyze the oxidation at C9 of the hydroxylated cycloaraneosene derivative and also catalyze the Baeyer-Villiger oxidation to give the lactone intermediate. The presumed lactone intermediate would be hydrolyzed to give an acrolein moiety and a carboxylate moiety. Then, [4+2]cycloaddition would occur between the acrolein moiety and the cyclopentadiene moiety to give sordaricin. SdnN might also be involved in the [4+2]cycloaddition after the hypothesized oxidation to accommodate the oxidized product and prompt the [4+2]cycloaddition. GDP-6-deoxy-D-altrose may be biosynthesized from GDP-D-mannose by the putative GDP-mannose-4,6-dehydratase sdnI and the short-chain dehydrogenase sdnK. The glycosyltransferase sdnJ catalyzes the attachment of 6-deoxy-D-altrose onto the 19-hydroxy group of sordaricin to give 4'-O-demethylsordarin. The methyltransferase sdnD would complete the biosynthesis of sordarin. Sordarin can be further modified into hypoxysordarin. The unique acyl chain at the 3'-hydroxy group of hypoxysordarin would be constructed by an iterative type I PKS sdnO and the trans-acting polyketide methyltransferase sdnL. SdnL would be responsible for the introduction of an alpha-methyl group of the polyketide chain. Alternatively, the beta-lactamase-like protein sdnR might be responsible for the cleavage and transfer of the polyketide chain from the PKS sdnO to sordarin. Two putative cytochrome P450 monooxygenases, sdnQ and sdnT, might catalyze the epoxidations of the polyketide chain to complete the biosynthesis of hypoxysordarin. Transcriptional regulators sdnM and sdnS are presumably encoded for the transcriptional regulation of the expression of the sdn gene cluster. This chain is Methyltransferase sdnD, found in Sordaria araneosa (Pleurage araneosa).